A 449-amino-acid polypeptide reads, in one-letter code: Phosphoglucosamine mutase (449 aa).

The Phosphoserine intermediate role is filled by Ser103. The Mg(2+) site is built by Ser103, Asp240, Asp242, and Asp244. Ser103 carries the post-translational modification Phosphoserine.

It belongs to the phosphohexose mutase family. Mg(2+) serves as cofactor. In terms of processing, activated by phosphorylation.

It catalyses the reaction alpha-D-glucosamine 1-phosphate = D-glucosamine 6-phosphate. Its function is as follows. Catalyzes the conversion of glucosamine-6-phosphate to glucosamine-1-phosphate. This chain is Phosphoglucosamine mutase, found in Thermobifida fusca (strain YX).